A 434-amino-acid polypeptide reads, in one-letter code: Glucose-6-phosphate 1-dehydrogenase (434 aa).

NADP(+)-binding positions include 7–14 (GSSGDLAK), Arg-36, Tyr-93, and Lys-112. D-glucose 6-phosphate contacts are provided by residues Lys-112, 137 to 141 (HYLLK), Glu-175, and Asp-193. His-198 serves as the catalytic Proton acceptor. The D-glucose 6-phosphate site is built by Lys-280 and Lys-285. Arg-286 provides a ligand contact to NADP(+).

This sequence belongs to the glucose-6-phosphate dehydrogenase family.

It catalyses the reaction D-glucose 6-phosphate + NADP(+) = 6-phospho-D-glucono-1,5-lactone + NADPH + H(+). Its pathway is carbohydrate degradation; pentose phosphate pathway; D-ribulose 5-phosphate from D-glucose 6-phosphate (oxidative stage): step 1/3. Functionally, catalyzes the rate-limiting step of the oxidative pentose-phosphate pathway, which represents a route for the dissimilation of carbohydrates besides glycolysis. The main function of this enzyme is to provide reducing power (NADPH) and pentose phosphates for fatty acid and nucleic acid synthesis. This chain is Glucose-6-phosphate 1-dehydrogenase (ZWF1), found in Encephalitozoon cuniculi (strain GB-M1) (Microsporidian parasite).